The sequence spans 266 residues: Diphthine synthase (266 aa).

Residues Leu9, Asp84, Val87, Ser112–Ile113, Leu169, Ala210, and His235 contribute to the S-adenosyl-L-methionine site.

Belongs to the diphthine synthase family. Homodimer.

It carries out the reaction 2-[(3S)-amino-3-carboxypropyl]-L-histidyl-[translation elongation factor 2] + 3 S-adenosyl-L-methionine = diphthine-[translation elongation factor 2] + 3 S-adenosyl-L-homocysteine + 3 H(+). It functions in the pathway protein modification; peptidyl-diphthamide biosynthesis. Its function is as follows. S-adenosyl-L-methionine-dependent methyltransferase that catalyzes the trimethylation of the amino group of the modified target histidine residue in translation elongation factor 2 (EF-2), to form an intermediate called diphthine. The three successive methylation reactions represent the second step of diphthamide biosynthesis. This chain is Diphthine synthase, found in Methanosarcina mazei (strain ATCC BAA-159 / DSM 3647 / Goe1 / Go1 / JCM 11833 / OCM 88) (Methanosarcina frisia).